Consider the following 235-residue polypeptide: Golgi to ER traffic protein 1 (235 aa).

Residue Met-1 is a topological domain, lumenal. Residues 2-21 (HWAAAVAIFFIVVTKFLQYT) traverse the membrane as a helical segment. Topologically, residues 22–104 (NKYHEKWISK…AFQAHLHKLR (83 aa)) are cytoplasmic. The stretch at 68–104 (WTKNNRKLDSLDKEINNLKDEIQSENKAFQAHLHKLR) forms a coiled coil. The helical transmembrane segment at 105–125 (LLALTVPFFVFKIMYGKTPVY) threads the bilayer. The Lumenal portion of the chain corresponds to 126–181 (KLSSSTSTLFPTFVSGVWSQGWLYVLLHPLRTISQKWHIMEGKFGASKFDDMALQS). Residues 182–198 (VSLGIWVWALMNVINGV) form a helical membrane-spanning segment. Residues 199–235 (EFIVKQLFLTPKMEAPASVETQEEKALDAVDDAIILD) are Cytoplasmic-facing.

The protein belongs to the WRB/GET1 family. As to quaternary structure, component of the Golgi to ER traffic (GET) complex, which is composed of GET1, GET2 and GET3. Within the complex, GET1 and GET2 form a heterotetramer which is stabilized by phosphatidylinositol binding and which binds to the GET3 homodimer.

The protein localises to the endoplasmic reticulum membrane. Its subcellular location is the golgi apparatus membrane. Its function is as follows. Required for the post-translational delivery of tail-anchored (TA) proteins to the endoplasmic reticulum. Together with GET2, acts as a membrane receptor for soluble GET3, which recognizes and selectively binds the transmembrane domain of TA proteins in the cytosol. The GET complex cooperates with the HDEL receptor ERD2 to mediate the ATP-dependent retrieval of resident ER proteins that contain a C-terminal H-D-E-L retention signal from the Golgi to the ER. In Saccharomyces cerevisiae (strain RM11-1a) (Baker's yeast), this protein is Golgi to ER traffic protein 1.